Consider the following 58-residue polypeptide: Metallothionein (58 aa).

Positions Met1 to Thr29 are beta. The a divalent metal cation site is built by Cys5, Cys6, Cys10, Cys12, Cys17, Cys21, Cys23, Cys26, Cys28, Cys31, Cys34, Cys38, Cys40, Cys46, Cys50, Cys54, Cys56, and Cys57. The alpha stretch occupies residues Pro30–Pro58.

The protein belongs to the metallothionein superfamily. Type 3 family.

Its function is as follows. Metallothioneins have a high content of cysteine residues that bind various heavy metals. Class I MTS in marine crustacea are involved in the sequestration of elevated levels of heavy-metal ions. The protein is Metallothionein of Carcinus maenas (Common shore crab).